A 794-amino-acid polypeptide reads, in one-letter code: MRVDYDVAAALRHEGLKPDDYDEICRRLQRAPNRVELGMFGVMWSEHCCYRNSRPLLSSFPTTGHRILVGPGENAGVVDLGDGQSLAFKIESHNHPSALEPFQGAATGVGGILRDIFTMGARPIALLNALRFGPLEDERNVGLIEGVVEGIAHYGNCVGVPTVGGEVAFDSSYSGNPLVNAMALGLMETDEIVCSGAHGVGYPVVYVGSTTGRDGMGGASFASAELTKASLDDRPAVQVGDPFLEKGLIEACLEAFKSGDVVAAQDMGAAGLTCSCSEMAAKGGLGIELDLDRVPARELGMTPYEFLLSESQERMLFVVKPGQEQSLMERFIRWGLQAAIVGCVLEKKVVRVLQKGEVVAEVPANALADDTPIDRHELVSDPPLEIQAKWDWQEDLLPVVGLKGINLNSQSHFGSNLSWDEILLKLLDDPTIASKRWVFRQYDHQVQANTVSAPGVSDAAVVRLRPQQGEGSVDEVNRGVAAVVDCPNRWVFLDPERGAIAAVAEAARNLSCVGAEPLAVTDNLNFPSPETPTGYWQLALACRGLSKACKSLSTPVTGGNVSLYNETRLADGEIQPIHPTPVVGMVGLVHDLANVCGQAWLEPGDLIWLLGVPIDTTVAVDPRVSLAGSSYLECIHGLVTGRPPEIDLKLECLVQSFLRNSITEGFVRSAHDLSDGGLAVAVAECCIAGNLGAHLELPSSDARLDRLLFAEGGSRILVSVPSTQAVAWQKVLNQAKTASPGAVFDQYLGVVTADEELLITQAGNRLVQLPLNQLRECFEQAIPRRMGLDLSSSV.

Histidine 47 is an active-site residue. Residues tyrosine 50 and lysine 89 each contribute to the ATP site. Glutamate 91 is a Mg(2+) binding site. Substrate contacts are provided by residues 92 to 95 (SHNH) and arginine 114. The Proton acceptor role is filled by histidine 93. Aspartate 115 contacts Mg(2+). Glutamine 238 lines the substrate pocket. Aspartate 266 lines the Mg(2+) pocket. 310–312 (ESQ) is a binding site for substrate. Positions 522 and 559 each coordinate ATP. Asparagine 560 contacts Mg(2+). Serine 562 contributes to the substrate binding site.

This sequence belongs to the FGAMS family. Monomer. Part of the FGAM synthase complex composed of 1 PurL, 1 PurQ and 2 PurS subunits.

The protein resides in the cytoplasm. The catalysed reaction is N(2)-formyl-N(1)-(5-phospho-beta-D-ribosyl)glycinamide + L-glutamine + ATP + H2O = 2-formamido-N(1)-(5-O-phospho-beta-D-ribosyl)acetamidine + L-glutamate + ADP + phosphate + H(+). It functions in the pathway purine metabolism; IMP biosynthesis via de novo pathway; 5-amino-1-(5-phospho-D-ribosyl)imidazole from N(2)-formyl-N(1)-(5-phospho-D-ribosyl)glycinamide: step 1/2. Functionally, part of the phosphoribosylformylglycinamidine synthase complex involved in the purines biosynthetic pathway. Catalyzes the ATP-dependent conversion of formylglycinamide ribonucleotide (FGAR) and glutamine to yield formylglycinamidine ribonucleotide (FGAM) and glutamate. The FGAM synthase complex is composed of three subunits. PurQ produces an ammonia molecule by converting glutamine to glutamate. PurL transfers the ammonia molecule to FGAR to form FGAM in an ATP-dependent manner. PurS interacts with PurQ and PurL and is thought to assist in the transfer of the ammonia molecule from PurQ to PurL. This chain is Phosphoribosylformylglycinamidine synthase subunit PurL, found in Prochlorococcus marinus (strain MIT 9303).